The primary structure comprises 242 residues: UPF0246 protein SPP_1571 (242 aa).

The protein belongs to the UPF0246 family.

The polypeptide is UPF0246 protein SPP_1571 (Streptococcus pneumoniae (strain P1031)).